A 65-amino-acid chain; its full sequence is Large ribosomal subunit protein bL35 (65 aa).

It belongs to the bacterial ribosomal protein bL35 family.

The sequence is that of Large ribosomal subunit protein bL35 from Phytoplasma australiense.